The sequence spans 829 residues: Venom phosphodiesterase CdcPDE (829 aa).

SMB domains follow at residues 8 to 51 (PQVS…VLPT) and 52 to 96 (QSWS…GETS). 16 disulfides stabilise this stretch: Cys-12–Cys-16, Cys-12–Cys-29, Cys-16–Cys-47, Cys-27–Cys-29, Cys-27–Cys-40, Cys-33–Cys-39, Cys-40–Cys-47, Cys-56–Cys-61, Cys-56–Cys-73, Cys-61–Cys-91, Cys-71–Cys-73, Cys-71–Cys-84, Cys-77–Cys-83, Cys-84–Cys-91, Cys-102–Cys-148, and Cys-110–Cys-322. Asn-17 is a glycosylation site (N-linked (GlcNAc...) asparagine). The Cell attachment site motif lies at 36 to 38 (RQA). Asp-125 and Thr-163 together coordinate a divalent metal cation. The active-site AMP-threonine intermediate is Thr-163. N-linked (GlcNAc...) asparagine glycosylation is found at Asn-194 and Asn-237. Lys-249 lines the AMP pocket. A divalent metal cation-binding residues include Asp-283, His-287, Asp-330, and His-331. His-287 contacts AMP. 6 cysteine pairs are disulfide-bonded: Cys-338-Cys-435, Cys-386-Cys-771, Cys-519-Cys-577, Cys-532-Cys-632, Cys-534-Cys-617, and Cys-740-Cys-750. Asn-383 carries an N-linked (GlcNAc...) asparagine glycan. His-440 is a binding site for a divalent metal cation. Residues Asn-572 and Asn-652 are each glycosylated (N-linked (GlcNAc...) asparagine).

It belongs to the nucleotide pyrophosphatase/phosphodiesterase family. Monomer. The cofactor is a divalent metal cation. In terms of processing, N-glycosylated. Glycosylation counts for an increased mass of ~9%. Contains 16 disulfide bonds. Expressed by venom gland.

The protein localises to the secreted. It carries out the reaction ADP + H2O = AMP + phosphate + H(+). Hydrolyzes ADP with high activity. Shows weak or no activity on 5'-AMP, 5'-GMP, 3'-AMP, ATP, cAMP, and cGMP. Is devoid of monophosphatase and proteinase activities. Inhibits ADP-induced platelet aggregation and is cytotoxic to human keratinocytes. Kinetic parameters indicated a higher affinity for the substrate bis(p-nitrophenyl) phosphate compared to others snake venom PDEs. Is recognized by the crotalid antivenom produced by the Instituto Butantan. The sequence is that of Venom phosphodiesterase CdcPDE from Crotalus durissus collilineatus (Brazilian rattlesnake).